A 609-amino-acid polypeptide reads, in one-letter code: MKWVESIFLIFLLNFTESRTLHRNEYGIASILDSYQCTAEINLTDLATIFFAQFVQEATYKEVSKMVKDALTAIEKPTGDEQSAGCLENQLPAFLEELCREKEILEKYGHSDCCSQSEEGRHNCFLAHKKPTPASIPFFQVPEPVTSCEAYEEDRETFMNKFIYEIARRHPFLYAPTILLWAARYDKIIPSCCKAENAVECFQTKAATVTKELRESSLLNQHACAVMKNFGTRTFQAITVTKLSQKFTKVNFTEIQKLVLDVAHVHEHCCRGDVLDCLQDGEKIMSYICSQQDTLSNKITECCKLTTLERGQCIIHAENDEKPEGLSPNLNRFLGDRDFNQFSSGEKNIFLASFVHEYSRRHPQLAVSVILRVAKGYQELLEKCFQTENPLECQDKGEEELQKYIQESQALAKRSCGLFQKLGEYYLQNAFLVAYTKKAPQLTSSELMAITRKMAATAATCCQLSEDKLLACGEGAADIIIGHLCIRHETTPVNPGVGQCCTSSYANRRPCFSSLVVDETYVPPAFSDDKFIFHKDLCQAQGVALQTMKQEFLINLVKQKPQITEEQLEAVIADFSGLLEKCCQGQEQEVCFAEEGQKLISKTRAALGV.

A signal peptide spans 1–18 (MKWVESIFLIFLLNFTES). Albumin domains follow at residues 19–210 (RTLH…ATVT), 211–402 (KELR…EELQ), and 403–601 (KYIQ…KLIS). A Cu(2+)-binding site is contributed by H22. N42 carries an N-linked (GlcNAc...) asparagine glycan. Cystine bridges form between C99-C114, C113-C124, C148-C193, C192-C201, C224-C270, C269-C277, C289-C303, and C302-C313. 3 positions are modified to phosphoserine: S111, S115, and S117. N251 carries N-linked (GlcNAc...) asparagine glycosylation. S344 is subject to Phosphoserine. 7 disulfide bridges follow: C384-C393, C416-C462, C461-C472, C485-C501, C500-C511, C538-C583, and C582-C591. The residue at position 444 (S444) is a Phosphoserine.

It belongs to the ALB/AFP/VDB family. As to quaternary structure, dimeric and trimeric forms have been found in addition to the monomeric form. As to expression, plasma. Synthesized by the fetal liver and yolk sac.

It localises to the secreted. Binds copper, nickel, and fatty acids as well as, and bilirubin less well than, serum albumin. The chain is Alpha-fetoprotein (AFP) from Pan troglodytes (Chimpanzee).